A 135-amino-acid polypeptide reads, in one-letter code: uncharacterized protein (135 aa).

This is an uncharacterized protein from Homo sapiens (Human).